The following is a 949-amino-acid chain: Protein translocase subunit SecA 1 (949 aa).

ATP contacts are provided by residues Gln86, 104-108 (GEGKT), and Asp493. The interval 869-949 (VDGGARERAP…AKPPKSVKKR (81 aa)) is disordered. The segment covering 925-934 (SRRERREAAR) has biased composition (basic and acidic residues).

Belongs to the SecA family. As to quaternary structure, monomer and homodimer. Part of the essential Sec protein translocation apparatus which comprises SecA, SecYEG and auxiliary proteins SecDF. Other proteins may also be involved.

It is found in the cell membrane. It localises to the cytoplasm. The enzyme catalyses ATP + H2O + cellular proteinSide 1 = ADP + phosphate + cellular proteinSide 2.. Part of the Sec protein translocase complex. Interacts with the SecYEG preprotein conducting channel. Has a central role in coupling the hydrolysis of ATP to the transfer of proteins into and across the cell membrane, serving as an ATP-driven molecular motor driving the stepwise translocation of polypeptide chains across the membrane. The polypeptide is Protein translocase subunit SecA 1 (Mycobacterium bovis (strain ATCC BAA-935 / AF2122/97)).